A 490-amino-acid chain; its full sequence is Dual specificity protein kinase CLK3 (490 aa).

A disordered region spans residues 1-138 (MHHCKRYRSP…SKRSSRSVED (138 aa)). Tyrosine 7 is modified (phosphotyrosine). A phosphoserine mark is found at serine 9, serine 49, serine 51, serine 67, serine 76, and serine 78. Composition is skewed to basic and acidic residues over residues 26–56 (YSREHEGRLRYPSRREPPPRRSRSRSHDRLP) and 63–76 (ERRDSDTYRCEERS). Positions 88–116 (RSRHRRRSRERGPYRTRKHAHHCHKRRTR) are enriched in basic residues. Low complexity predominate over residues 117 to 130 (SCSSASSRSQQSSK). Serine 135 bears the Phosphoserine mark. A Protein kinase domain is found at 156 to 472 (YEIVGNLGEG…LAEALLHPFF (317 aa)). Residues 162-170 (LGEGTFGKV) and lysine 186 each bind ATP. The Proton acceptor role is filled by aspartate 283.

Belongs to the protein kinase superfamily. CMGC Ser/Thr protein kinase family. Lammer subfamily. Autophosphorylates on all three types of residues. In terms of tissue distribution, endothelial cells.

Its subcellular location is the nucleus. It localises to the cytoplasm. It is found in the cytoplasmic vesicle. The protein localises to the secretory vesicle. The protein resides in the acrosome. Its subcellular location is the nucleus speckle. The enzyme catalyses L-seryl-[protein] + ATP = O-phospho-L-seryl-[protein] + ADP + H(+). It carries out the reaction L-threonyl-[protein] + ATP = O-phospho-L-threonyl-[protein] + ADP + H(+). It catalyses the reaction L-tyrosyl-[protein] + ATP = O-phospho-L-tyrosyl-[protein] + ADP + H(+). Leucettine L41 inhibits its kinase activity and affects the regulation of alternative splicing mediated by phosphorylation of SR proteins. Its function is as follows. Dual specificity kinase acting on both serine/threonine and tyrosine-containing substrates. Phosphorylates serine- and arginine-rich (SR) proteins of the spliceosomal complex. May be a constituent of a network of regulatory mechanisms that enable SR proteins to control RNA splicing and can cause redistribution of SR proteins from speckles to a diffuse nucleoplasmic distribution. Phosphorylates SRSF1 and SRSF3. Regulates the alternative splicing of tissue factor (F3) pre-mRNA in endothelial cells. This chain is Dual specificity protein kinase CLK3, found in Homo sapiens (Human).